A 232-amino-acid polypeptide reads, in one-letter code: MNYISFPTAQHAVDKIAQEFVIYSQLNHPVHISLSGGSTPKLLFKTLAKSPYAEQINWKNLHFWWGDDRMVPPSDPESNYGEVQKLLFDHIQIPAENIHRIRGENEPHFELKRFEEELSAVIPNGVFDWIILGMGIDGHTASLFPHQTNFDDENLAVIAKHPESGQIRISKTAKLIEQAKRITYLVTGESKADILKEIQTTPAENLPYPAAKIKAKNGVTEWYLDKAAVRLL.

The protein belongs to the glucosamine/galactosamine-6-phosphate isomerase family. 6-phosphogluconolactonase subfamily.

The enzyme catalyses 6-phospho-D-glucono-1,5-lactone + H2O = 6-phospho-D-gluconate + H(+). Its pathway is carbohydrate degradation; pentose phosphate pathway; D-ribulose 5-phosphate from D-glucose 6-phosphate (oxidative stage): step 2/3. In terms of biological role, hydrolysis of 6-phosphogluconolactone to 6-phosphogluconate. The sequence is that of 6-phosphogluconolactonase (pgl) from Haemophilus influenzae (strain ATCC 51907 / DSM 11121 / KW20 / Rd).